A 718-amino-acid chain; its full sequence is Putative proline-rich receptor-like protein kinase PERK11 (718 aa).

A disordered region spans residues 1 to 256; the sequence is MDKVQQQADL…GGTSQQSNES (256 aa). Topologically, residues 1–262 are extracellular; it reads MDKVQQQADL…SNESNYTEKT (262 aa). Composition is skewed to pro residues over residues 45 to 105, 115 to 132, and 157 to 167; these read ATSP…PPQS, IPFP…PPPS, and LPSPPSTPFSP. 2 stretches are compositionally biased toward low complexity: residues 168–203 and 211–244; these read PSQE…LQPL and SNRV…ANSN. Asparagine 231, asparagine 254, and asparagine 257 each carry an N-linked (GlcNAc...) asparagine glycan. Residues 263 to 283 form a helical membrane-spanning segment; that stretch reads VIGIGIAGVLVILFIAGVFFV. At 284-718 the chain is on the cytoplasmic side; the sequence is RRKQKKGSSS…RAFNTSHRNH (435 aa). The interval 314–348 is disordered; the sequence is HYRQKPGNGNSSAQNSSPDTNSLGNPKHGRGTPDS. A compositionally biased stretch (polar residues) spans 320-337; sequence GNGNSSAQNSSPDTNSLG. A Phosphothreonine modification is found at threonine 359. In terms of domain architecture, Protein kinase spans 370 to 649; it reads FCKSFVVGEG…VRALDTRDDL (280 aa). ATP-binding positions include 376–384 and lysine 398; that span reads VGEGGFGCV. A Phosphotyrosine modification is found at tyrosine 443. Aspartate 494 acts as the Proton acceptor in catalysis. Phosphoserine is present on residues serine 498 and serine 527. A phosphothreonine mark is found at threonine 528 and threonine 533. A Phosphotyrosine modification is found at tyrosine 541. Residues 683–718 are disordered; it reads SSDLGTNTGYYPSQDYATSHEYESESRAFNTSHRNH. Composition is skewed to polar residues over residues 685-699 and 709-718; these read DLGT…QDYA and RAFNTSHRNH.

Belongs to the protein kinase superfamily. Ser/Thr protein kinase family. As to expression, mostly expressed in flower buds.

It is found in the cell membrane. It catalyses the reaction L-seryl-[protein] + ATP = O-phospho-L-seryl-[protein] + ADP + H(+). The catalysed reaction is L-threonyl-[protein] + ATP = O-phospho-L-threonyl-[protein] + ADP + H(+). The chain is Putative proline-rich receptor-like protein kinase PERK11 (PERK11) from Arabidopsis thaliana (Mouse-ear cress).